The following is a 244-amino-acid chain: 2-C-methyl-D-erythritol 4-phosphate cytidylyltransferase (244 aa).

Belongs to the IspD/TarI cytidylyltransferase family. IspD subfamily.

The enzyme catalyses 2-C-methyl-D-erythritol 4-phosphate + CTP + H(+) = 4-CDP-2-C-methyl-D-erythritol + diphosphate. Its pathway is isoprenoid biosynthesis; isopentenyl diphosphate biosynthesis via DXP pathway; isopentenyl diphosphate from 1-deoxy-D-xylulose 5-phosphate: step 2/6. Catalyzes the formation of 4-diphosphocytidyl-2-C-methyl-D-erythritol from CTP and 2-C-methyl-D-erythritol 4-phosphate (MEP). This chain is 2-C-methyl-D-erythritol 4-phosphate cytidylyltransferase, found in Corynebacterium diphtheriae (strain ATCC 700971 / NCTC 13129 / Biotype gravis).